The sequence spans 240 residues: Probable septum site-determining protein MinC (240 aa).

The protein belongs to the MinC family. As to quaternary structure, interacts with MinD and FtsZ.

Its function is as follows. Cell division inhibitor that blocks the formation of polar Z ring septums. Rapidly oscillates between the poles of the cell to destabilize FtsZ filaments that have formed before they mature into polar Z rings. Prevents FtsZ polymerization. In Acinetobacter baumannii (strain ATCC 17978 / DSM 105126 / CIP 53.77 / LMG 1025 / NCDC KC755 / 5377), this protein is Probable septum site-determining protein MinC.